The chain runs to 382 residues: Inactive anthranilate O-methyltransferase 1 (382 aa).

Tyr-20, Cys-61, Asn-66, Asp-102, Leu-103, Ser-146, and Tyr-147 together coordinate S-adenosyl-L-homocysteine. Residues Glu-268 and Phe-270 each contribute to the Mg(2+) site.

This sequence belongs to the methyltransferase superfamily. Type-7 methyltransferase family. SABATH subfamily.

This Zea mays (Maize) protein is Inactive anthranilate O-methyltransferase 1 (AAMT1I).